An 878-amino-acid polypeptide reads, in one-letter code: Alanine--tRNA ligase (878 aa).

Residues histidine 568, histidine 572, cysteine 669, and histidine 673 each contribute to the Zn(2+) site.

The protein belongs to the class-II aminoacyl-tRNA synthetase family. Zn(2+) serves as cofactor.

Its subcellular location is the cytoplasm. The catalysed reaction is tRNA(Ala) + L-alanine + ATP = L-alanyl-tRNA(Ala) + AMP + diphosphate. Its function is as follows. Catalyzes the attachment of alanine to tRNA(Ala) in a two-step reaction: alanine is first activated by ATP to form Ala-AMP and then transferred to the acceptor end of tRNA(Ala). Also edits incorrectly charged Ser-tRNA(Ala) and Gly-tRNA(Ala) via its editing domain. This is Alanine--tRNA ligase from Polaromonas sp. (strain JS666 / ATCC BAA-500).